Reading from the N-terminus, the 785-residue chain is Toll-like receptor 2 (785 aa).

The N-terminal stretch at 1 to 17 is a signal peptide; the sequence is MSRVLWTLWVLGAVTNL. The Extracellular portion of the chain corresponds to 18-589; sequence SKEEAPDQSS…RLSVSECHRT (572 aa). A disulfide bond links C31 and C37. LRR repeat units follow at residues 54-77, 78-101, 102-125, 126-150, 151-175, 176-199, 200-223, 224-250, 251-278, 279-308, 309-337, 338-361, 362-388, 389-414, 415-437, 438-457, 458-478, 479-500, and 501-524; these read AVRS…RDCV, NLKA…LSLW, SLEH…RPLS, SLKF…SQLT, NLRI…AGLT, FLEE…KSIQ, NISY…DLSS, SLKH…ETHT, LVKK…NYVS, GVLE…KNIG, QIET…SLTE, DVKR…QHLK, SLEY…DAWP, SLQT…LTLK, NLTN…QWPE, KMKY…GCIP, KTLE…LNLP, QLKE…SLLP, and MLLV…DSFH. N115 carries N-linked (GlcNAc...) asparagine glycosylation. Residues N200 and N246 are each glycosylated (N-linked (GlcNAc...) asparagine). Residues C354 and C383 are joined by a disulfide bond. Residues N415 and N443 are each glycosylated (N-linked (GlcNAc...) asparagine). The cysteines at positions 433 and 455 are disulfide-linked. The LRRCT domain maps to 525–579; the sequence is TLKTLEAGGNNFICSCEFLSFTQEQQALAKVLIDWPANYLCDSPSHVRGQQVQDV. The helical transmembrane segment at 590-610 threads the bilayer; sequence ALVSGMCCALFLLILLTEVLC. The Cytoplasmic portion of the chain corresponds to 611 to 785; it reads HRFHGLWYMR…WLNLRTAIKS (175 aa). The region spanning 640–783 is the TIR domain; that stretch reads VCYDAFVSYS…GFWLNLRTAI (144 aa). K755 is covalently cross-linked (Glycyl lysine isopeptide (Lys-Gly) (interchain with G-Cter in ubiquitin)). An ATG16L1-binding motif motif is present at residues 762 to 779; the sequence is YLEWPTDDAQQEGFWLNL.

This sequence belongs to the Toll-like receptor family. In terms of assembly, interacts with LY96, TLR1 and TLR6 (via extracellular domain). TLR2 seems to exist in heterodimers with either TLR1 or TLR6 before stimulation by the ligand. The heterodimers form bigger oligomers in response to their corresponding ligands as well as further heterotypic associations with other receptors such as CD14 and/or CD36. Binds MYD88 (via TIR domain). Interacts with TICAM1. Interacts with CNPY3. Interacts with ATG16L1. Interacts with PPP1R11. Interacts with TICAM2. Interacts with TIRAP. Post-translationally, ubiquitinated at Lys-755 by PPP1R11, leading to its degradation. Deubiquitinated by USP2. In terms of processing, glycosylation of Asn-443 is critical for secretion of the N-terminal ectodomain of TLR2.

It is found in the membrane. The protein resides in the cytoplasmic vesicle. It localises to the phagosome membrane. Its subcellular location is the membrane raft. In terms of biological role, cooperates with LY96 to mediate the innate immune response to bacterial lipoproteins and other microbial cell wall components. Cooperates with TLR1 or TLR6 to mediate the innate immune response to bacterial lipoproteins or lipopeptides. Acts via MYD88 and TRAF6, leading to NF-kappa-B activation, cytokine secretion and the inflammatory response. May also promote apoptosis in response to lipoproteins. Forms activation clusters composed of several receptors depending on the ligand, these clusters trigger signaling from the cell surface and subsequently are targeted to the Golgi in a lipid-raft dependent pathway. Forms the cluster TLR2:TLR6:CD14:CD36 in response to diacylated lipopeptides and TLR2:TLR1:CD14 in response to triacylated lipopeptides. This chain is Toll-like receptor 2 (TLR2), found in Canis lupus familiaris (Dog).